Here is an 89-residue protein sequence, read N- to C-terminus: Small ribosomal subunit protein uS15 (89 aa).

This sequence belongs to the universal ribosomal protein uS15 family. In terms of assembly, part of the 30S ribosomal subunit. Forms a bridge to the 50S subunit in the 70S ribosome, contacting the 23S rRNA.

In terms of biological role, one of the primary rRNA binding proteins, it binds directly to 16S rRNA where it helps nucleate assembly of the platform of the 30S subunit by binding and bridging several RNA helices of the 16S rRNA. Its function is as follows. Forms an intersubunit bridge (bridge B4) with the 23S rRNA of the 50S subunit in the ribosome. The protein is Small ribosomal subunit protein uS15 of Enterobacter sp. (strain 638).